A 250-amino-acid chain; its full sequence is Thermostable monoacylglycerol lipase (250 aa).

Phe29 is a substrate binding site. The active-site Nucleophile is the Ser97. Met98 is a binding site for substrate. Active-site charge relay system residues include Asp196 and His226.

It belongs to the lipase/esterase LIP3/BchO family. As to quaternary structure, monomer.

The enzyme catalyses Hydrolyzes glycerol monoesters of long-chain fatty acids.. Its activity is regulated as follows. Not inhibited by cholate, but slightly inhibited by triton X-100 and deoxycholate. Completely inhibited by PMSF (phenylmethylsulfonyl fluoride) at a concentration of 200 uM. Its function is as follows. Hydrolyzes monoacylglycerols, with the highest activity occurring with 1-monolauroylglycerol. This is Thermostable monoacylglycerol lipase from Bacillus sp. (strain H-257).